The sequence spans 433 residues: Isocitrate dehydrogenase [NADP], chloroplastic (433 aa).

A chloroplast-targeting transit peptide spans 1–21 (QFSPNLSFSAFFPIITFTTAT). NADP(+) is bound by residues 98–100 (TIT) and arginine 105. Threonine 100 contacts substrate. Substrate is bound by residues 117–123 (SPNGTIR), arginine 132, and arginine 155. Mn(2+) is bound at residue aspartate 275. Lysine 283 provides a ligand contact to NADP(+). Aspartate 298 lines the Mn(2+) pocket. NADP(+) contacts are provided by residues 333–338 (GTVTRH) and asparagine 351.

It belongs to the isocitrate and isopropylmalate dehydrogenases family. Requires Mg(2+) as cofactor. It depends on Mn(2+) as a cofactor. In terms of tissue distribution, detected in all tissues examined.

It localises to the plastid. It is found in the chloroplast. The catalysed reaction is D-threo-isocitrate + NADP(+) = 2-oxoglutarate + CO2 + NADPH. This is Isocitrate dehydrogenase [NADP], chloroplastic from Medicago sativa (Alfalfa).